Here is a 238-residue protein sequence, read N- to C-terminus: Probable transcriptional regulatory protein VIBHAR_07036 (238 aa).

The protein belongs to the TACO1 family.

It localises to the cytoplasm. This is Probable transcriptional regulatory protein VIBHAR_07036 from Vibrio campbellii (strain ATCC BAA-1116).